A 415-amino-acid chain; its full sequence is CTVILGFFIARTITKPITDMRNQTVEMSRGNYTQRVKIYGNDEIGELALAFNNLSKRVQEAQANTESEKRRLDSVITHMSDGIIATDRRGRIRIVNDMALKMLGMAKEDIIGYYMLSVLSLEDEFKLEEIQENNDSFLLDLNEEEGLIARVNFSTIVQETGFVTGYIAVLHDVTEQQQVERERREFVANVSHELRTPLTSMNSYIEALEEGAWKDEELAPQFLSVTREETERMIRLVNDLLQLSKMDNESDQINKEIIDFNMFINKIINRHEMSAKDTTFIRDIPKKTIFTEFDPDKMTQVFDNVITNAMKYSRGDKRVEFHVKQNPLYNRMTIRIKDNGIGIPINKVDKIFDRFYRVDKARTRKMGGTGLGLAISKEIVEAHNGRIWANSVEGQGTSIFITLPCEVIEDGDWDE.

Residues 11 to 63 (RTITKPITDMRNQTVEMSRGNYTQRVKIYGNDEIGELALAFNNLSKRVQEAQA) enclose the HAMP domain. The 71-residue stretch at 68–138 (EKRRLDSVIT…EIQENNDSFL (71 aa)) folds into the PAS domain. Zn(2+)-binding residues include His78, Asp81, His171, and Glu175. The PAC domain maps to 121-185 (LEDEFKLEEI…QQQVERERRE (65 aa)). A Histidine kinase domain is found at 189–407 (NVSHELRTPL…SIFITLPCEV (219 aa)). His192 is modified (phosphohistidine; by autocatalysis).

In terms of assembly, forms homodimers. Forms homooligomers. It depends on NH4(+) as a cofactor. Autophosphorylated.

It localises to the cell membrane. It catalyses the reaction ATP + protein L-histidine = ADP + protein N-phospho-L-histidine.. With respect to regulation, by zinc. Zinc-binding negatively regulates WalK kinase activity and thus autophosphorylation. Member of the two-component regulatory system WalK/WalR that regulates genes involved in cell wall metabolism, virulence regulation, biofilm production, oxidative stress resistance and antibiotic resistance via direct or indirect regulation of autolysins. Functions as a sensor protein kinase which is autophosphorylated at a histidine residue in the dimerization domain and transfers its phosphate group to the conserved aspartic acid residue in the regulatory domain of WalR. In turn, WalR binds to the upstream promoter regions of the target genes to positively and negatively regulate their expression. The chain is Sensor protein kinase WalK (walK) from Staphylococcus aureus.